The sequence spans 134 residues: Two-component response regulator ORR5 (134 aa).

Positions histidine 16–leucine 133 constitute a Response regulatory domain. A 4-aspartylphosphate modification is found at aspartate 66.

The protein belongs to the ARR family. Type-A subfamily. In terms of processing, two-component system major event consists of a His-to-Asp phosphorelay between a sensor histidine kinase (HK) and a response regulator (RR). In plants, the His-to-Asp phosphorelay involves an additional intermediate named Histidine-containing phosphotransfer protein (HPt). This multistep phosphorelay consists of a His-Asp-His-Asp sequential transfer of a phosphate group between first a His and an Asp of the HK protein, followed by the transfer to a conserved His of the HPt protein and finally the transfer to an Asp in the receiver domain of the RR protein. As to expression, expressed in mature leaves and shoots, and at low levels in roots and flowers.

In terms of biological role, functions as a response regulator involved in His-to-Asp phosphorelay signal transduction system. Phosphorylation of the Asp residue in the receiver domain activates the ability of the protein to promote the transcription of target genes. Type-A response regulators seem to act as negative regulators of the cytokinin signaling. In Oryza sativa subsp. indica (Rice), this protein is Two-component response regulator ORR5.